Reading from the N-terminus, the 434-residue chain is Glutamate/glutamine/aspartate/asparagine transport system permease protein BztC (434 aa).

Transmembrane regions (helical) follow at residues 41-61 (LTVFGLLATVWLVQAAAPWLL), 113-133 (LFVTFAGLFLALAPVLFDALP), 135-155 (KLIWGTLLYPLAAFWLLWGGP), 156-176 (IWGPVSVLAGFAILGLLFTAL), 180-200 (LGVPVSAGIGLVVAALFWLYA), 227-247 (FLLALVIGVTAIVVSLPLGIL), 272-292 (GVPLITLLFTASLLLQYFLPP), 298-318 (LILRVVILVTLFAAAYIAEVI), 360-380 (IVSSFIGLFKDTTLVAFVGLF), and 398-418 (GTYWEPYIFVALIFFLFNFSM). In terms of domain architecture, ABC transmembrane type-1 spans 227-422 (FLLALVIGVT…LFNFSMSRYS (196 aa)).

The protein belongs to the binding-protein-dependent transport system permease family. HisMQ subfamily. As to quaternary structure, bztB and BztC form a heterodimer which can form a membrane complex with a homodimer of BztD.

Its subcellular location is the cell inner membrane. Its function is as follows. Part of a binding-protein-dependent transport system for glutamate, glutamine, aspartate and asparagine. Probably responsible for the translocation of the substrate across the membrane. The sequence is that of Glutamate/glutamine/aspartate/asparagine transport system permease protein BztC (bztC) from Rhodobacter capsulatus (strain ATCC BAA-309 / NBRC 16581 / SB1003).